A 647-amino-acid chain; its full sequence is tRNA uridine 5-carboxymethylaminomethyl modification enzyme MnmG (647 aa).

FAD is bound by residues 22 to 27 (GAGHAG), V134, and S189. 283–297 (GARYCPSIEDKIMRF) contacts NAD(+). Q380 contacts FAD.

Belongs to the MnmG family. As to quaternary structure, homodimer. Heterotetramer of two MnmE and two MnmG subunits. Requires FAD as cofactor.

The protein localises to the cytoplasm. NAD-binding protein involved in the addition of a carboxymethylaminomethyl (cmnm) group at the wobble position (U34) of certain tRNAs, forming tRNA-cmnm(5)s(2)U34. This chain is tRNA uridine 5-carboxymethylaminomethyl modification enzyme MnmG, found in Desulfotalea psychrophila (strain LSv54 / DSM 12343).